An 89-amino-acid chain; its full sequence is Small ribosomal subunit protein uS15 (89 aa).

It belongs to the universal ribosomal protein uS15 family. Part of the 30S ribosomal subunit. Forms a bridge to the 50S subunit in the 70S ribosome, contacting the 23S rRNA.

Functionally, one of the primary rRNA binding proteins, it binds directly to 16S rRNA where it helps nucleate assembly of the platform of the 30S subunit by binding and bridging several RNA helices of the 16S rRNA. Its function is as follows. Forms an intersubunit bridge (bridge B4) with the 23S rRNA of the 50S subunit in the ribosome. This is Small ribosomal subunit protein uS15 from Coxiella burnetii (strain CbuK_Q154) (Coxiella burnetii (strain Q154)).